The following is a 77-amino-acid chain: Acyl carrier protein (77 aa).

The region spanning 1 to 76 (MSLEDDVKSI…DVITYIKTRQ (76 aa)) is the Carrier domain. An O-(pantetheine 4'-phosphoryl)serine modification is found at Ser-36.

This sequence belongs to the acyl carrier protein (ACP) family. Post-translationally, 4'-phosphopantetheine is transferred from CoA to a specific serine of apo-ACP by AcpS. This modification is essential for activity because fatty acids are bound in thioester linkage to the sulfhydryl of the prosthetic group.

It is found in the cytoplasm. The protein operates within lipid metabolism; fatty acid biosynthesis. Carrier of the growing fatty acid chain in fatty acid biosynthesis. The protein is Acyl carrier protein of Chlamydia caviae (strain ATCC VR-813 / DSM 19441 / 03DC25 / GPIC) (Chlamydophila caviae).